A 418-amino-acid polypeptide reads, in one-letter code: Magnesium-chelatase subunit ChlI-2, chloroplastic (418 aa).

Residues 1–55 (MASLLGRSPSSILTCPRISSPSSTSSMSHLCFGPEKLSGRIQFNPKKNRSRYHVS) constitute a chloroplast transit peptide. Valine 56 bears the N-acetylvaline mark. Intrachain disulfides connect cysteine 96-cysteine 187 and cysteine 348-cysteine 390. 113-120 (GDRGTGKS) lines the ATP pocket.

Belongs to the Mg-chelatase subunits D/I family. The magnesium chelatase complex is a heterotrimer consisting of subunits CHLI, CHLD and CHLH. Expressed in leaves.

The protein resides in the plastid. Its subcellular location is the chloroplast. It carries out the reaction protoporphyrin IX + Mg(2+) + ATP + H2O = Mg-protoporphyrin IX + ADP + phosphate + 3 H(+). The protein operates within porphyrin-containing compound metabolism; chlorophyll biosynthesis. Its activity is regulated as follows. Redox regulation; active in reducing conditions, inactive in oxidizing conditions. Thioredoxins f and m mediate the reversible reductive activation of oxidized CHLI2. In terms of biological role, involved in chlorophyll biosynthesis. Catalyzes the insertion of magnesium ion into protoporphyrin IX to yield Mg-protoporphyrin IX. The reaction takes place in two steps, with an ATP-dependent activation followed by an ATP-dependent chelation step. Possesses low affinity for ATP and may play a limited role in chlorophyll biosynthesis, and contributes to the assembly of the Mg-chelatase complex. The polypeptide is Magnesium-chelatase subunit ChlI-2, chloroplastic (CHLI2) (Arabidopsis thaliana (Mouse-ear cress)).